The primary structure comprises 386 residues: Mannitol-1-phosphate 5-dehydrogenase (386 aa).

Residue 6 to 17 (AIHFGGGNIGRG) participates in NAD(+) binding. Residue K214 is part of the active site.

This sequence belongs to the mannitol dehydrogenase family. In terms of assembly, monomer.

The catalysed reaction is D-mannitol 1-phosphate + NAD(+) = beta-D-fructose 6-phosphate + NADH + H(+). In terms of biological role, catalyzes the NAD(H)-dependent interconversion of D-fructose 6-phosphate and D-mannitol 1-phosphate in the mannitol metabolic pathway. Plays a key role in liamocins biosynthesis by providing the mannitol moity that is linked to 3,5-dihydroxydecanoic acid (provided by the HR-PKS PKS1) via ester bond formation catalyzed by the esterase EST1. The protein is Mannitol-1-phosphate 5-dehydrogenase of Aureobasidium melanogenum (Aureobasidium pullulans var. melanogenum).